Reading from the N-terminus, the 69-residue chain is UPF0337 protein YjbJ (69 aa).

The protein belongs to the UPF0337 (CsbD) family.

The chain is UPF0337 protein YjbJ (yjbJ) from Escherichia coli O6:H1 (strain CFT073 / ATCC 700928 / UPEC).